The following is a 352-amino-acid chain: S-adenosylmethionine:tRNA ribosyltransferase-isomerase (352 aa).

Belongs to the QueA family. In terms of assembly, monomer.

The protein resides in the cytoplasm. It carries out the reaction 7-aminomethyl-7-carbaguanosine(34) in tRNA + S-adenosyl-L-methionine = epoxyqueuosine(34) in tRNA + adenine + L-methionine + 2 H(+). It participates in tRNA modification; tRNA-queuosine biosynthesis. Functionally, transfers and isomerizes the ribose moiety from AdoMet to the 7-aminomethyl group of 7-deazaguanine (preQ1-tRNA) to give epoxyqueuosine (oQ-tRNA). The sequence is that of S-adenosylmethionine:tRNA ribosyltransferase-isomerase from Allorhizobium ampelinum (strain ATCC BAA-846 / DSM 112012 / S4) (Agrobacterium vitis (strain S4)).